We begin with the raw amino-acid sequence, 630 residues long: Polygalacturonase-1 non-catalytic subunit beta (630 aa).

Positions 1 to 27 (MHTKIHLPPCILLLLLFSLPSFNVVVG) are cleaved as a signal peptide. Positions 28-108 (GDGESGNPFT…MCAPDLSPSL (81 aa)) are excised as a propeptide. N124, N142, N256, N334, N369, and N387 each carry an N-linked (GlcNAc...) asparagine glycan. A propeptide spanning residues 398 to 630 (EVNGGKKVNN…ENDMTWAIAD (233 aa)) is cleaved from the precursor. The region spanning 415–629 (FFREKMLKSG…FENDMTWAIA (215 aa)) is the BURP domain.

As to quaternary structure, interacts with polygalacturonase-2 (isoenzymes PG2A and PG2B) to form heterodimers called polygalacturonase-1 (PG1). Mostly expressed in fruit pericarp. Also detected at low levels in cell wall of roots, leaves and flowers (at protein level).

The protein localises to the secreted. It localises to the extracellular space. The protein resides in the apoplast. Its subcellular location is the cell wall. In terms of biological role, non-catalytic subunit of the polygalacturonase isozyme 1 (PG1). Necessary and sufficient to convert the polygalacturonase from its monomeric form PG2 to its heterodimeric form PG1. Seems to limit the depolymerization and solubilization of cell wall polyuronides mediated by PG2 during ripening, probably by recruiting PG2 to form PG1. The chain is Polygalacturonase-1 non-catalytic subunit beta (GP1) from Solanum lycopersicum (Tomato).